The sequence spans 574 residues: Ankyrin repeat protein B18 (574 aa).

6 ANK repeats span residues 56–87 (TGYTALHCYLYNNYFTNDVLKVLLNHGVDVTI), 135–164 (IKSRYMLLKEEDIDENIVSTLLDKGIDPNF), 167–213 (DGYT…NLNA), 217–249 (CGNTPFHLYLSIEMCNNIHMTKMLLTFNPNFEI), 253–285 (HGLTPILCYITSDYIQHDILVMLIHHYETNVGE), and 327–356 (EGKTLLHIACEYNNTHVIDYLIRINGDINA). The region spanning 541–574 (KCLLTLLPSEIIYEILYMLTIYDLYNISYPPTKV) is the F-box domain.

In Variola virus (isolate Human/India/Ind3/1967) (VARV), this protein is Ankyrin repeat protein B18.